A 118-amino-acid chain; its full sequence is D-dopachrome decarboxylase (118 aa).

Proline 2 is modified (N-acetylproline).

The protein belongs to the MIF family. In terms of assembly, homotrimer.

Its subcellular location is the cytoplasm. The catalysed reaction is D-dopachrome + H(+) = 5,6-dihydroxyindole + CO2. Tautomerization of D-dopachrome with decarboxylation to give 5,6-dihydroxyindole (DHI). This chain is D-dopachrome decarboxylase (DDT), found in Gallus gallus (Chicken).